The primary structure comprises 366 residues: Leucine dehydrogenase (366 aa).

K82 is an active-site residue. 182–188 (GVGNVAY) serves as a coordination point for NAD(+).

It belongs to the Glu/Leu/Phe/Val dehydrogenases family.

The enzyme catalyses L-leucine + NAD(+) + H2O = 4-methyl-2-oxopentanoate + NH4(+) + NADH + H(+). Its pathway is amino-acid degradation; L-leucine degradation; 4-methyl-2-oxopentanoate from L-leucine (dehydrogenase route): step 1/1. Catalyzes the reversible deamination of L-leucine to 4-methyl-2-oxopentanoate. The polypeptide is Leucine dehydrogenase (ldh) (Bacillus cereus).